A 157-amino-acid chain; its full sequence is uncharacterized protein (157 aa).

This is an uncharacterized protein from Bacillus subtilis (strain 168).